The following is a 220-amino-acid chain: Deoxyribose-phosphate aldolase (220 aa).

D89 serves as the catalytic Proton donor/acceptor. The active-site Schiff-base intermediate with acetaldehyde is K151. K180 serves as the catalytic Proton donor/acceptor.

It belongs to the DeoC/FbaB aldolase family. DeoC type 1 subfamily.

The protein resides in the cytoplasm. The enzyme catalyses 2-deoxy-D-ribose 5-phosphate = D-glyceraldehyde 3-phosphate + acetaldehyde. It functions in the pathway carbohydrate degradation; 2-deoxy-D-ribose 1-phosphate degradation; D-glyceraldehyde 3-phosphate and acetaldehyde from 2-deoxy-alpha-D-ribose 1-phosphate: step 2/2. Catalyzes a reversible aldol reaction between acetaldehyde and D-glyceraldehyde 3-phosphate to generate 2-deoxy-D-ribose 5-phosphate. This chain is Deoxyribose-phosphate aldolase, found in Staphylococcus haemolyticus (strain JCSC1435).